We begin with the raw amino-acid sequence, 318 residues long: GPN-loop GTPase 2 (318 aa).

29 to 34 (GSGKST) lines the GTP pocket. A Gly-Pro-Asn (GPN)-loop; involved in dimer interface motif is present at residues 85–87 (GPN). 187-190 (SKMD) provides a ligand contact to GTP.

It belongs to the GPN-loop GTPase family. In terms of assembly, heterodimers with gpn1 or gpn3. Binds to RNA polymerase II (RNAPII).

Small GTPase required for proper localization of RNA polymerase II and III (RNAPII and RNAPIII). May act at an RNAP assembly step prior to nuclear import. This Xenopus laevis (African clawed frog) protein is GPN-loop GTPase 2.